Here is a 278-residue protein sequence, read N- to C-terminus: Phosphatidylglycerol--prolipoprotein diacylglyceryl transferase (278 aa).

The next 3 membrane-spanning stretches (helical) occupy residues 21–41 (WYGI…QASV), 54–74 (IIFW…VIFQ), and 88–108 (IWHG…TGII). An a 1,2-diacyl-sn-glycero-3-phospho-(1'-sn-glycerol)-binding site is contributed by R136. The next 2 membrane-spanning stretches (helical) occupy residues 176–196 (QPTF…LILL) and 234–254 (IRVA…IMII).

This sequence belongs to the Lgt family.

The protein resides in the cell membrane. It carries out the reaction L-cysteinyl-[prolipoprotein] + a 1,2-diacyl-sn-glycero-3-phospho-(1'-sn-glycerol) = an S-1,2-diacyl-sn-glyceryl-L-cysteinyl-[prolipoprotein] + sn-glycerol 1-phosphate + H(+). Its pathway is protein modification; lipoprotein biosynthesis (diacylglyceryl transfer). Its function is as follows. Catalyzes the transfer of the diacylglyceryl group from phosphatidylglycerol to the sulfhydryl group of the N-terminal cysteine of a prolipoprotein, the first step in the formation of mature lipoproteins. The sequence is that of Phosphatidylglycerol--prolipoprotein diacylglyceryl transferase from Staphylococcus xylosus.